The sequence spans 446 residues: Probable glucan endo-1,3-beta-glucosidase eglC (446 aa).

Positions 1–18 are cleaved as a signal peptide; the sequence is MQFTHLVALALALATSEA. The active-site Proton donor is E128. An N-linked (GlcNAc...) asparagine glycan is attached at N183. E239 (nucleophile) is an active-site residue. 2 N-linked (GlcNAc...) asparagine glycosylation sites follow: N364 and N370. Positions 393 to 416 are disordered; it reads SSGAGASGASGQSSSSTGSSSAPS. Residues 401-416 show a composition bias toward low complexity; sequence ASGQSSSSTGSSSAPS. Residue N423 is the site of GPI-anchor amidated asparagine attachment. Positions 424 to 446 are cleaved as a propeptide — removed in mature form; it reads AASGLSGSIFGAVVAVCLALAAL.

The protein belongs to the glycosyl hydrolase 17 family. In terms of processing, the GPI-anchor is attached to the protein in the endoplasmic reticulum and serves to target the protein to the cell surface. There, the glucosamine-inositol phospholipid moiety is cleaved off and the GPI-modified mannoprotein is covalently attached via its lipidless GPI glycan remnant to the 1,6-beta-glucan of the outer cell wall layer.

The protein localises to the cell membrane. Its subcellular location is the secreted. The protein resides in the cell wall. It carries out the reaction Hydrolysis of (1-&gt;3)-beta-D-glucosidic linkages in (1-&gt;3)-beta-D-glucans.. Functionally, glucanases play a role in cell expansion during growth, in cell-cell fusion during mating, and in spore release during sporulation. This enzyme may be involved in beta-glucan degradation and also function biosynthetically as a transglycosylase. This chain is Probable glucan endo-1,3-beta-glucosidase eglC (eglC), found in Aspergillus fumigatus (strain ATCC MYA-4609 / CBS 101355 / FGSC A1100 / Af293) (Neosartorya fumigata).